The following is a 229-amino-acid chain: Ribosome maturation factor RimM (229 aa).

The interval 1–21 (MAGHDSGNAKRGRSPSFGVFV) is disordered. The 82-residue stretch at 148 to 229 (ADEFYWVDLI…RVVVDWEADY (82 aa)) folds into the PRC barrel domain.

The protein belongs to the RimM family. As to quaternary structure, binds ribosomal protein uS19.

The protein resides in the cytoplasm. In terms of biological role, an accessory protein needed during the final step in the assembly of 30S ribosomal subunit, possibly for assembly of the head region. Essential for efficient processing of 16S rRNA. May be needed both before and after RbfA during the maturation of 16S rRNA. It has affinity for free ribosomal 30S subunits but not for 70S ribosomes. This chain is Ribosome maturation factor RimM, found in Burkholderia pseudomallei (strain 1106a).